The sequence spans 409 residues: Methylthioribose-1-phosphate isomerase (409 aa).

Asp-277 serves as the catalytic Proton donor.

It belongs to the eIF-2B alpha/beta/delta subunits family. MtnA subfamily.

It localises to the cytoplasm. Its subcellular location is the nucleus. It carries out the reaction 5-(methylsulfanyl)-alpha-D-ribose 1-phosphate = 5-(methylsulfanyl)-D-ribulose 1-phosphate. It participates in amino-acid biosynthesis; L-methionine biosynthesis via salvage pathway; L-methionine from S-methyl-5-thio-alpha-D-ribose 1-phosphate: step 1/6. In terms of biological role, catalyzes the interconversion of methylthioribose-1-phosphate (MTR-1-P) into methylthioribulose-1-phosphate (MTRu-1-P). The sequence is that of Methylthioribose-1-phosphate isomerase from Scheffersomyces stipitis (strain ATCC 58785 / CBS 6054 / NBRC 10063 / NRRL Y-11545) (Yeast).